We begin with the raw amino-acid sequence, 194 residues long: E3 ubiquitin-protein ligase RNF185 (194 aa).

A disordered region spans residues 1 to 32 (MASKGPTTSASTKSSSTGGTSGSSSSNGAGDN). The segment at 31 to 82 (DNTNQDNTFECNICLDTAKDAVISLCGHLFCWPCLHQWLETRPNRQVCPVCK) is required for ubiquitin ligase activity and protection against ER stress-induced cell death. The segment at 41-82 (CNICLDTAKDAVISLCGHLFCWPCLHQWLETRPNRQVCPVCK) adopts an RING-type zinc-finger fold. The disordered stretch occupies residues 92 to 125 (PLYGRGSTGQQDPREKTPPRPQGQRPEPENRGGF). 2 helical membrane passes run 133-153 (GGFQMSFGIGAFPFGIFATAF) and 174-194 (QFLSRLFLFVALVIMFWLLIA).

It localises to the mitochondrion outer membrane. The protein resides in the endoplasmic reticulum membrane. The enzyme catalyses S-ubiquitinyl-[E2 ubiquitin-conjugating enzyme]-L-cysteine + [acceptor protein]-L-lysine = [E2 ubiquitin-conjugating enzyme]-L-cysteine + N(6)-ubiquitinyl-[acceptor protein]-L-lysine.. Its pathway is protein modification; protein ubiquitination. E3 ubiquitin-protein ligase that regulates selective mitochondrial autophagy by mediating 'Lys-63'-linked polyubiquitination. Acts in the endoplasmic reticulum (ER)-associated degradation (ERAD) pathway, which targets misfolded proteins that accumulate in the endoplasmic reticulum (ER) for ubiquitination and subsequent proteasome-mediated degradation. Protects cells from ER stress-induced apoptosis. Responsible for the cotranslational ubiquitination and degradation of CFTR in the ERAD pathway. Also acts as a regulator of the innate antiviral response by catalyzing 'Lys-27'-linked polyubiquitination of CGAS, thereby promoting CGAS cyclic GMP-AMP synthase activity. Preferentially associates with the E2 enzymes UBE2J1 and UBE2J2. This Gallus gallus (Chicken) protein is E3 ubiquitin-protein ligase RNF185 (RNF185).